The following is a 251-amino-acid chain: Ly6/PLAUR domain-containing protein 5 (251 aa).

An N-terminal signal peptide occupies residues 1-25 (MAMGVPRVILLCLFGAALCLTGSQA). 2 N-linked (GlcNAc...) asparagine glycosylation sites follow: Asn120 and Asn174. Residues 135–214 (CYACIGVHQD…GSCCEGYLCN (80 aa)) form the UPAR/Ly6 domain. The GPI-anchor amidated alanine moiety is linked to residue Ala225. Positions 226–251 (SATTPPRALQVLALLLPVLLLVGLSA) are cleaved as a propeptide — removed in mature form.

The protein localises to the cell membrane. In Homo sapiens (Human), this protein is Ly6/PLAUR domain-containing protein 5 (LYPD5).